The following is a 219-amino-acid chain: Thiamine-phosphate synthase (219 aa).

4-amino-2-methyl-5-(diphosphooxymethyl)pyrimidine contacts are provided by residues Gln44–Lys48 and Asn79. Residues Asp80 and Asp99 each contribute to the Mg(2+) site. Position 117 (Ser117) interacts with 4-amino-2-methyl-5-(diphosphooxymethyl)pyrimidine. Residue Thr143–Thr145 participates in 2-[(2R,5Z)-2-carboxy-4-methylthiazol-5(2H)-ylidene]ethyl phosphate binding. 4-amino-2-methyl-5-(diphosphooxymethyl)pyrimidine is bound at residue Lys146. 2-[(2R,5Z)-2-carboxy-4-methylthiazol-5(2H)-ylidene]ethyl phosphate-binding positions include Gly175 and Ile195 to Ser196.

The protein belongs to the thiamine-phosphate synthase family. It depends on Mg(2+) as a cofactor.

The enzyme catalyses 2-[(2R,5Z)-2-carboxy-4-methylthiazol-5(2H)-ylidene]ethyl phosphate + 4-amino-2-methyl-5-(diphosphooxymethyl)pyrimidine + 2 H(+) = thiamine phosphate + CO2 + diphosphate. It catalyses the reaction 2-(2-carboxy-4-methylthiazol-5-yl)ethyl phosphate + 4-amino-2-methyl-5-(diphosphooxymethyl)pyrimidine + 2 H(+) = thiamine phosphate + CO2 + diphosphate. The catalysed reaction is 4-methyl-5-(2-phosphooxyethyl)-thiazole + 4-amino-2-methyl-5-(diphosphooxymethyl)pyrimidine + H(+) = thiamine phosphate + diphosphate. The protein operates within cofactor biosynthesis; thiamine diphosphate biosynthesis; thiamine phosphate from 4-amino-2-methyl-5-diphosphomethylpyrimidine and 4-methyl-5-(2-phosphoethyl)-thiazole: step 1/1. Condenses 4-methyl-5-(beta-hydroxyethyl)thiazole monophosphate (THZ-P) and 2-methyl-4-amino-5-hydroxymethyl pyrimidine pyrophosphate (HMP-PP) to form thiamine monophosphate (TMP). The sequence is that of Thiamine-phosphate synthase from Bacillus mycoides (strain KBAB4) (Bacillus weihenstephanensis).